The following is a 338-amino-acid chain: Tetraacyldisaccharide 4'-kinase (338 aa).

66–73 (IAGGAGKT) is an ATP binding site.

This sequence belongs to the LpxK family.

The catalysed reaction is a lipid A disaccharide + ATP = a lipid IVA + ADP + H(+). The protein operates within glycolipid biosynthesis; lipid IV(A) biosynthesis; lipid IV(A) from (3R)-3-hydroxytetradecanoyl-[acyl-carrier-protein] and UDP-N-acetyl-alpha-D-glucosamine: step 6/6. Transfers the gamma-phosphate of ATP to the 4'-position of a tetraacyldisaccharide 1-phosphate intermediate (termed DS-1-P) to form tetraacyldisaccharide 1,4'-bis-phosphate (lipid IVA). The protein is Tetraacyldisaccharide 4'-kinase of Delftia acidovorans (strain DSM 14801 / SPH-1).